The following is a 249-amino-acid chain: Undecaprenyl-diphosphatase (249 aa).

8 helical membrane-spanning segments follow: residues 11-31, 35-55, 74-94, 101-121, 135-155, 175-195, 208-228, and 229-249; these read GLTE…TAIF, PDVG…VIFV, ITLS…GIFF, IFSE…FMLL, IPYL…LPGI, AVKY…VLEM, FIVA…MVIA, and GKLK…IFYI.

This sequence belongs to the UppP family.

The protein localises to the cell membrane. The catalysed reaction is di-trans,octa-cis-undecaprenyl diphosphate + H2O = di-trans,octa-cis-undecaprenyl phosphate + phosphate + H(+). Functionally, catalyzes the dephosphorylation of undecaprenyl diphosphate (UPP). In Methanococcus vannielii (strain ATCC 35089 / DSM 1224 / JCM 13029 / OCM 148 / SB), this protein is Undecaprenyl-diphosphatase.